A 465-amino-acid chain; its full sequence is MSNPFPAHFLWGGAIAANQVEGAYLTDGKGLSTSDLQPQGIFGEIVTRQPGDSGIKDVAIDFYHRYPQDIALFAEMGFTCLRISIAWTRIFPQGDEAEPNEAGLAFYDRLFDELAKYGIQPLVTLSHYEMPYGLVEKHGGWGNRLTIDCFERYARTVFARYRHKVKRWLTFNEINMSLHAPFTGVGLPPDSDKAAIYQAIHHQLVASARAVKACHDMIPDAQIGNMLLGAMLYPLTSKPEDVMESLHQNREWLFFGDVQVRGAYPGYMHRYFREQGITLNITAQDKQDLKATVDFISFSYYMTGCVTTDEAQLEKTRGNILNMVPNPYLESSEWGWQIDPLGLRYLLNFLYDRYQKPLFIVENGLGAKDKIEENGDIYDDYRIRYLNDHLVQVGEAIDDGVEVLGYTCWGPIDLVSASKAEMSKRYGFIYVDRDDAGHGSLERRRKKSFYWYQSVIASHGKTLTR.

Catalysis depends on E173, which acts as the Proton donor. E362 (nucleophile) is an active-site residue.

It belongs to the glycosyl hydrolase 1 family.

The catalysed reaction is 6-phospho-beta-D-glucosyl-(1-&gt;4)-D-glucose + H2O = D-glucose 6-phosphate + D-glucose. Its pathway is carbohydrate metabolism; beta-glucoside metabolism. The sequence is that of 6-phospho-beta-glucosidase (arbB) from Dickeya chrysanthemi (Pectobacterium chrysanthemi).